A 530-amino-acid chain; its full sequence is ATP synthase subunit alpha (530 aa).

172–179 (GDRQTGKT) contacts ATP.

This sequence belongs to the ATPase alpha/beta chains family. F-type ATPases have 2 components, CF(1) - the catalytic core - and CF(0) - the membrane proton channel. CF(1) has five subunits: alpha(3), beta(3), gamma(1), delta(1), epsilon(1). CF(0) has three main subunits: a(1), b(2) and c(9-12). The alpha and beta chains form an alternating ring which encloses part of the gamma chain. CF(1) is attached to CF(0) by a central stalk formed by the gamma and epsilon chains, while a peripheral stalk is formed by the delta and b chains.

The protein localises to the cell inner membrane. The catalysed reaction is ATP + H2O + 4 H(+)(in) = ADP + phosphate + 5 H(+)(out). Produces ATP from ADP in the presence of a proton gradient across the membrane. The alpha chain is a regulatory subunit. The chain is ATP synthase subunit alpha from Phocaeicola vulgatus (strain ATCC 8482 / DSM 1447 / JCM 5826 / CCUG 4940 / NBRC 14291 / NCTC 11154) (Bacteroides vulgatus).